The primary structure comprises 137 residues: Small ribosomal subunit protein uS11 (137 aa).

Residues glutamate 116–leucine 137 are disordered. Residues lysine 128–leucine 137 are compositionally biased toward basic residues.

Belongs to the universal ribosomal protein uS11 family.

The chain is Small ribosomal subunit protein uS11 (RPS14) from Kluyveromyces lactis (strain ATCC 8585 / CBS 2359 / DSM 70799 / NBRC 1267 / NRRL Y-1140 / WM37) (Yeast).